The primary structure comprises 122 residues: Large ribosomal subunit protein bL12 (122 aa).

Belongs to the bacterial ribosomal protein bL12 family. In terms of assembly, homodimer. Part of the ribosomal stalk of the 50S ribosomal subunit. Forms a multimeric L10(L12)X complex, where L10 forms an elongated spine to which 2 to 4 L12 dimers bind in a sequential fashion. Binds GTP-bound translation factors.

Forms part of the ribosomal stalk which helps the ribosome interact with GTP-bound translation factors. Is thus essential for accurate translation. The chain is Large ribosomal subunit protein bL12 from Stutzerimonas stutzeri (strain A1501) (Pseudomonas stutzeri).